Here is a 599-residue protein sequence, read N- to C-terminus: Protein ECM25 (599 aa).

The Rho-GAP domain occupies 181 to 359 (NRLTPLAIRQ…NLLDFFPEIA (179 aa)). 3 disordered regions span residues 362–447 (ISSP…PLPI), 468–495 (ASSS…SSTD), and 543–563 (ELQE…KFSQ). Composition is skewed to low complexity over residues 363 to 373 (SSPPSSVSSSS), 396 to 413 (TLPR…TSPT), and 468 to 483 (ASSS…KTPS). The span at 543–562 (ELQEKKKKNETTSKTADKFS) shows a compositional bias: basic and acidic residues.

It localises to the cytoplasm. May be involved in cell wall organization and biogenesis. The protein is Protein ECM25 (ECM25) of Saccharomyces cerevisiae (strain ATCC 204508 / S288c) (Baker's yeast).